A 227-amino-acid polypeptide reads, in one-letter code: PKHD-type hydroxylase NE2125 (227 aa).

A Fe2OG dioxygenase domain is found at 78–179; that stretch reads KIVPPFFNRY…RLACFMFIQS (102 aa). Fe cation contacts are provided by His-97, Asp-99, and His-160. Arg-170 contacts 2-oxoglutarate.

The cofactor is Fe(2+). L-ascorbate is required as a cofactor.

This chain is PKHD-type hydroxylase NE2125, found in Nitrosomonas europaea (strain ATCC 19718 / CIP 103999 / KCTC 2705 / NBRC 14298).